A 100-amino-acid polypeptide reads, in one-letter code: Large ribosomal subunit protein uL23 (100 aa).

This sequence belongs to the universal ribosomal protein uL23 family. As to quaternary structure, part of the 50S ribosomal subunit. Contacts protein L29, and trigger factor when it is bound to the ribosome.

Functionally, one of the early assembly proteins it binds 23S rRNA. One of the proteins that surrounds the polypeptide exit tunnel on the outside of the ribosome. Forms the main docking site for trigger factor binding to the ribosome. In Xylella fastidiosa (strain M23), this protein is Large ribosomal subunit protein uL23.